Consider the following 444-residue polypeptide: Maintenance of mitochondrial morphology protein 1 (444 aa).

A compositionally biased stretch (polar residues) spans 1–16 (MKGVENTLSQSESVNR). Positions 1-20 (MKGVENTLSQSESVNRGYNG) are disordered. At 1–107 (MKGVENTLSQ…TFSSRSFAEG (107 aa)) the chain is on the lumenal side. A helical transmembrane segment spans residues 108 to 128 (LVVGQLSVIVVLIFFIKFFIF). Residues 129 to 444 (SDGPAKTGGG…QEEDPSRAPE (316 aa)) lie on the Cytoplasmic side of the membrane. Positions 136-157 (GGGGGSSAESRSSGFTGSPLTS) are disordered. Residues 142 to 157 (SAESRSSGFTGSPLTS) show a composition bias toward low complexity. Positions 204 to 418 (SPESLDWFNV…EPRFQFVKLP (215 aa)) constitute an SMP-LTD domain. The disordered stretch occupies residues 425–444 (KNTREEKSDMQEEDPSRAPE). Over residues 426–444 (NTREEKSDMQEEDPSRAPE) the composition is skewed to basic and acidic residues.

Belongs to the MMM1 family. In terms of assembly, homodimer. Component of the ER-mitochondria encounter structure (ERMES) or MDM complex, composed of MMM1, MDM10, MDM12 and MDM34. An MMM1 homodimer associates with one molecule of MDM12 on each side in a pairwise head-to-tail manner, and the SMP-LTD domains of MMM1 and MDM12 generate a continuous hydrophobic tunnel for phospholipid trafficking.

It localises to the endoplasmic reticulum membrane. Component of the ERMES/MDM complex, which serves as a molecular tether to connect the endoplasmic reticulum (ER) and mitochondria. Components of this complex are involved in the control of mitochondrial shape and protein biogenesis, and function in nonvesicular lipid trafficking between the ER and mitochondria. The MDM12-MMM1 subcomplex functions in the major beta-barrel assembly pathway that is responsible for biogenesis of all outer membrane beta-barrel proteins, and acts in a late step after the SAM complex. The MDM10-MDM12-MMM1 subcomplex further acts in the TOM40-specific pathway after the action of the MDM12-MMM1 complex. Essential for establishing and maintaining the structure of mitochondria and maintenance of mtDNA nucleoids. In Eremothecium gossypii (strain ATCC 10895 / CBS 109.51 / FGSC 9923 / NRRL Y-1056) (Yeast), this protein is Maintenance of mitochondrial morphology protein 1.